The primary structure comprises 2620 residues: Highly reducing polyketide synthase tazB (2620 aa).

Residues 1-22 (MPFLNGNTTHHEAHSAEPDHGN) are disordered. The 416-residue stretch at 1–416 (MPFLNGNTTH…GTNAHCILDD (416 aa)) folds into the Ketosynthase family 3 (KS3) domain. Residues 9–22 (THHEAHSAEPDHGN) show a composition bias toward basic and acidic residues. Residues Cys-166, His-301, and His-340 each act as for beta-ketoacyl synthase activity in the active site. Positions 460–481 (GFNKFDEPRGSDSAGSNANGSH) are disordered. A compositionally biased stretch (low complexity) spans 470–481 (SDSAGSNANGSH). Residues 601–923 (VFTGQGAQYA…PYLATLSRKD (323 aa)) form a malonyl-CoA:ACP transacylase (MAT) domain region. The tract at residues 993–1128 (HDLFGAPVPD…GEVSPDLKKS (136 aa)) is N-terminal hotdog fold. A dehydratase (DH) domain region spans residues 993–1313 (HDLFGAPVPD…LAGIRLSPFK (321 aa)). The region spanning 993–1318 (HDLFGAPVPD…LSPFKPESSE (326 aa)) is the PKS/mFAS DH domain. Residue His-1025 is the Proton acceptor; for dehydratase activity of the active site. A C-terminal hotdog fold region spans residues 1157-1318 (TAPVDFTPVY…LSPFKPESSE (162 aa)). The active-site Proton donor; for dehydratase activity is Asp-1225. The interval 1379–1680 (GLRESREMKD…VDFEASSSIY (302 aa)) is methyltransferase (CMet) domain. Residues 1910–2227 (GIDSLTWVTD…TGKSIGKVTL (318 aa)) are enoyl reductase (ER) domain. Residues 2251-2425 (SFILAGGLGG…HGASVNLGAV (175 aa)) form a ketoreductase (KR) domain region. A Carrier domain is found at 2539 to 2620 (EAARIIHKAL…VSLSSFTKFR (82 aa)). Ser-2576 is modified (O-(pantetheine 4'-phosphoryl)serine).

Its pathway is secondary metabolite biosynthesis. Highly reducing polyketide synthase; part of the gene cluster that mediates the biosynthesis of azaterrilone A and other azaphilones, a class of fungal metabolites characterized by a highly oxygenated pyrano-quinone bicyclic core and exhibiting a broad range of bioactivities. The first step of the pathway begins with the non-reducing polyketide synthase tazA that assembles one acetyl-CoA starter unit, five malonyl-CoA units, and catalyzes a series of Claisen condensations, methylation, PT-mediated cyclization, and finally releases the first hexaketide precursor through the R-domain. The tazA product then undergoes reduction on its terminal ketone and the following pyran-ring formation by yet undetermined enzyme(s). Dehydration and enoyl reduction, possibly involving the trans-enoyl reductase tazE leads to the next intermediate. TazD is predicted as an acetyltransferase and might catalyze the acetylation steps leading to the synthesis of azaterrilone A. Azaterrilone A is not the final product of the taz pathway and both the highly reducing polyketide synthase tazB and the dual enzyme tazHJ catalyze late steps of the pathway, leading to the production of the 2 final stereoisomers that contain additional polyketide modification whose structures have still to be determined. In Aspergillus terreus (strain NIH 2624 / FGSC A1156), this protein is Highly reducing polyketide synthase tazB.